A 130-amino-acid chain; its full sequence is Protein ApaG (130 aa).

One can recognise an ApaG domain in the interval 3-127; that stretch reads RAVTRGIEVS…FSLDIPEQRR (125 aa).

The chain is Protein ApaG from Brucella anthropi (strain ATCC 49188 / DSM 6882 / CCUG 24695 / JCM 21032 / LMG 3331 / NBRC 15819 / NCTC 12168 / Alc 37) (Ochrobactrum anthropi).